Consider the following 410-residue polypeptide: Peptidase T (410 aa).

Residue histidine 79 participates in Zn(2+) binding. Aspartate 81 is a catalytic residue. Aspartate 142 provides a ligand contact to Zn(2+). The Proton acceptor role is filled by glutamate 176. Residues glutamate 177, aspartate 199, and histidine 381 each contribute to the Zn(2+) site.

This sequence belongs to the peptidase M20B family. Requires Zn(2+) as cofactor.

The protein resides in the cytoplasm. The catalysed reaction is Release of the N-terminal residue from a tripeptide.. Functionally, cleaves the N-terminal amino acid of tripeptides. In Listeria monocytogenes serotype 4b (strain CLIP80459), this protein is Peptidase T.